We begin with the raw amino-acid sequence, 491 residues long: Ketol-acid reductoisomerase (NADP(+)) (491 aa).

The KARI N-terminal Rossmann domain maps to 15 to 208 (AQLGTCRFME…GGHRAGVLES (194 aa)). NADP(+) contacts are provided by residues 45–48 (CGAQ), arginine 68, arginine 76, serine 78, and 108–110 (DKQ). Histidine 132 is a catalytic residue. Glycine 158 contacts NADP(+). KARI C-terminal knotted domains are found at residues 209–353 (SFVA…KEQE) and 354–486 (YFDK…MTAM). Mg(2+) contacts are provided by aspartate 217, glutamate 221, glutamate 389, and glutamate 393. Serine 414 lines the substrate pocket.

The protein belongs to the ketol-acid reductoisomerase family. It depends on Mg(2+) as a cofactor.

It carries out the reaction (2R)-2,3-dihydroxy-3-methylbutanoate + NADP(+) = (2S)-2-acetolactate + NADPH + H(+). It catalyses the reaction (2R,3R)-2,3-dihydroxy-3-methylpentanoate + NADP(+) = (S)-2-ethyl-2-hydroxy-3-oxobutanoate + NADPH + H(+). It participates in amino-acid biosynthesis; L-isoleucine biosynthesis; L-isoleucine from 2-oxobutanoate: step 2/4. The protein operates within amino-acid biosynthesis; L-valine biosynthesis; L-valine from pyruvate: step 2/4. Functionally, involved in the biosynthesis of branched-chain amino acids (BCAA). Catalyzes an alkyl-migration followed by a ketol-acid reduction of (S)-2-acetolactate (S2AL) to yield (R)-2,3-dihydroxy-isovalerate. In the isomerase reaction, S2AL is rearranged via a Mg-dependent methyl migration to produce 3-hydroxy-3-methyl-2-ketobutyrate (HMKB). In the reductase reaction, this 2-ketoacid undergoes a metal-dependent reduction by NADPH to yield (R)-2,3-dihydroxy-isovalerate. The sequence is that of Ketol-acid reductoisomerase (NADP(+)) from Christiangramia forsetii (strain DSM 17595 / CGMCC 1.15422 / KT0803) (Gramella forsetii).